A 1067-amino-acid polypeptide reads, in one-letter code: MAARRMAQESLDSVLQEKSKRYGDSEAVGEALHLKAQDLLRTGSRARADVYEDIHGDSRYSASGSGVYSLDMGREGLRGDMFVGPSFRSSNQSVGEDSYLRKECGRDLEPAHTDSRDQSFGHRNLGHFPSQDWKLALRGSWEQDLGHSVSQESSWSQEYGFGPSLLGDLASSRRMEKESRDYDLDHPGEVDSVSRSSGQVLTRGRSLNIADQEGTLLGKGDTQGLLGAKGVGKLITLKSMTTKKIPVASRITSKPQGTNQIQKPTPSPDVTIGTSPVLDEIQFAALKIPLGLDLRTLGLPRRKMGFDAIDKADVFSRFGIEIIKWAGFHTIKDDLKFSQLFQTLFELETETCAKMLASFKCSLKPEHRDFCFFTIKFLKHSALKTPRVDNEFLNMLLDKGAVKTKNCFFEIIKPFDKSIMRLQDRLLKGVTPLLMACNAYELSVKMKTLTSPLDLAMALETTNSLCRKSLALLGQTFSLASSFRQEKILEAVGLQDIAPSPAYFPNFEDSTLFGREYIDHLKAWLMASGYPLQLKRAVPPESREQKTTAQTWASSTLSQAVPQRADHRVVDTIDQLVMRVIQGRLSPRERTLLLQDPAYWFLSDESSLEYKYYKLKLAESQRLNHSWPIVERRPTPAQCAVRAMLYAQAVRSLKRRLLPWQRRRLIRSQGPRGLKAKKATTAQQTSLSSGTRQKHHGRQASGSLRVKPPPRDSSDAAQDCLSEPAKPCPQPSSPGALGPSPRPTGADDSEALPASSRCPSANMDAKTMETAEKLARFVAQVGPEIEQFSIENSTDNPDLWFLHDQSSSAFKFYREKVLELCPSISFQSTGEAGDSVQSPTAGKEGKGEPQEGHPEQEASLEGTEVLPEEEEEDEEESEDEGGEETSTLRPQAGAAKCPGSEGSSPTDSIPGEGSREDQASTPGLSQASSGSCFPRKRISSKSLKVGMIPAPKRVCLIQESKVHEPVRIAYDRPRGRPIAKKKKPKDMEFSQQKLTDKNVGFQMLQKMGWKEGHGLGSLGKGIREPVSVGALSEGEGLGADGPEQKEDTFDVFRQRMMQMYRHKRASK.

Ser-93 bears the Phosphoserine mark. Residues 177–189 (KESRDYDLDHPGE) are compositionally biased toward basic and acidic residues. Positions 177–199 (KESRDYDLDHPGEVDSVSRSSGQ) are disordered. Ser-206 is subject to Phosphoserine. Residue Lys-219 forms a Glycyl lysine isopeptide (Lys-Gly) (interchain with G-Cter in SUMO2) linkage. Thr-265 carries the phosphothreonine modification. A phosphoserine mark is found at Ser-267 and Ser-586. One copy of the SURP motif 1 repeat lies at 573–616 (IDQLVMRVIQGRLSPRERTLLLQDPAYWFLSDESSLEYKYYKLK). Residues 668–767 (SQGPRGLKAK…CPSANMDAKT (100 aa)) are disordered. Over residues 680–691 (TTAQQTSLSSGT) the composition is skewed to polar residues. Ser-740 is modified (phosphoserine). Thr-744 is subject to Phosphothreonine. Residues 770 to 813 (TAEKLARFVAQVGPEIEQFSIENSTDNPDLWFLHDQSSSAFKFY) form an SURP motif 2 repeat. Over residues 825 to 840 (SFQSTGEAGDSVQSPT) the composition is skewed to polar residues. Disordered stretches follow at residues 825 to 944 (SFQS…KSLK) and 967 to 991 (RIAY…EFSQ). Ser-838 carries the post-translational modification Phosphoserine. A compositionally biased stretch (basic and acidic residues) spans 843–856 (KEGKGEPQEGHPEQ). Over residues 866 to 883 (LPEEEEEDEEESEDEGGE) the composition is skewed to acidic residues. The span at 919-931 (ASTPGLSQASSGS) shows a compositional bias: polar residues. A compositionally biased stretch (basic residues) spans 975–984 (GRPIAKKKKP). The short motif at 980–985 (KKKKPK) is the Nuclear localization signal element. Residues 996–1042 (DKNVGFQMLQKMGWKEGHGLGSLGKGIREPVSVGALSEGEGLGADGP) form the G-patch domain.

It is found in the nucleus. In terms of biological role, may play a role in mRNA splicing. The sequence is that of SURP and G-patch domain-containing protein 2 (Sugp2) from Mus musculus (Mouse).